Reading from the N-terminus, the 398-residue chain is Dual specificity mitogen-activated protein kinase kinase 2 (398 aa).

The tract at residues 1 to 29 (MPAKRKPVLPALTITPSPAEGPGPGGSAE) is disordered. A Protein kinase domain is found at 70–367 (FERISELGAG…LKMLMNHTFI (298 aa)). ATP is bound by residues 76–84 (LGAGNGGVV) and Lys99. Asp192 (proton acceptor) is an active-site residue. Ser220 and Ser224 each carry phosphoserine; by RAF.

This sequence belongs to the protein kinase superfamily. STE Ser/Thr protein kinase family. MAP kinase kinase subfamily. In terms of processing, activated by phosphorylation on Ser/Thr catalyzed by MAP kinase kinase kinases (RAF).

It carries out the reaction L-seryl-[protein] + ATP = O-phospho-L-seryl-[protein] + ADP + H(+). The catalysed reaction is L-threonyl-[protein] + ATP = O-phospho-L-threonyl-[protein] + ADP + H(+). It catalyses the reaction L-tyrosyl-[protein] + ATP = O-phospho-L-tyrosyl-[protein] + ADP + H(+). Its function is as follows. Catalyzes the concomitant phosphorylation of a threonine and a tyrosine residue in a Thr-Glu-Tyr sequence located in MAP kinases. Activates the ERK1 and ERK2 MAP kinases. The protein is Dual specificity mitogen-activated protein kinase kinase 2 (MAP2K2) of Gallus gallus (Chicken).